We begin with the raw amino-acid sequence, 139 residues long: Transcriptional regulator WhiB5 (139 aa).

The 74-residue stretch at 4–77 folds into the 4Fe-4S Wbl-type domain; sequence PCATDPELWF…AGIKLPGGQY (74 aa). 4 residues coordinate [4Fe-4S] cluster: cysteine 5, cysteine 41, cysteine 45, and cysteine 53.

Belongs to the WhiB family. The cofactor is [4Fe-4S] cluster. In terms of processing, the Fe-S cluster can be nitrosylated by nitric oxide (NO). Post-translationally, upon Fe-S cluster removal intramolecular disulfide bonds are formed.

It is found in the cytoplasm. A transcription factor that is probably redox-responsive. Probably plays a role in immunomodulation and reactivation after chronic infection. Its induction results in transcription of a number of genes including sigM, and the genes for 2 type VII secretion systems ESX-2 and ESX-4. Seems to negatively regulate its own expression. The apo-form has been shown to act as a protein disulfide reductase. The apo- but not holo-form probably binds DNA. The chain is Transcriptional regulator WhiB5 (whiB5) from Mycobacterium tuberculosis (strain ATCC 25618 / H37Rv).